The sequence spans 79 residues: Antimicrobial peptide UyCT1 (79 aa).

Positions Met1–Ala23 are cleaved as a signal peptide. Isoleucine amide is present on Ile37. Positions Gly41–Met79 are excised as a propeptide.

Belongs to the non-disulfide-bridged peptide (NDBP) superfamily. Short antimicrobial peptide (group 4) family. As to expression, expressed by the venom gland.

The protein localises to the secreted. It is found in the target cell membrane. Functionally, inhibits the growth of Gram-positive (S.aureus, MIC=15 uM) and Gram-negative bacteria (E.coli, MIC=10 uM and P.aeruginosa, MIC=10 uM). It also shows 26% of hemolysis when 15 uM are tested (81% at 50 uM). Its function is as follows. Inhibits the growth of Gram-negative bacteria (E.coli, MIC=25 uM and P.aeruginosa, MIC=40 uM). It also shows 7% of hemolysis when 50 uM are tested. Does not show activity against the Gram-positive bacteria S.aureus. The protein is Antimicrobial peptide UyCT1 of Urodacus yaschenkoi (Inland robust scorpion).